Reading from the N-terminus, the 121-residue chain is Ribosome-binding factor A (121 aa).

Belongs to the RbfA family. In terms of assembly, monomer. Binds 30S ribosomal subunits, but not 50S ribosomal subunits or 70S ribosomes.

Its subcellular location is the cytoplasm. One of several proteins that assist in the late maturation steps of the functional core of the 30S ribosomal subunit. Associates with free 30S ribosomal subunits (but not with 30S subunits that are part of 70S ribosomes or polysomes). Required for efficient processing of 16S rRNA. May interact with the 5'-terminal helix region of 16S rRNA. The polypeptide is Ribosome-binding factor A (Heliobacterium modesticaldum (strain ATCC 51547 / Ice1)).